The chain runs to 229 residues: MGYVRWLGHAAFEISIDGYTVLIDPWLTNPLSPVKVEDYRDKVDLIIVTHDHGDHLGESVELLRINRRARFVAVYELANYVAEQLGGATDRVIGANIGGPVRIPDINLKVMFFPATHSSSRGTPTGVLIVGKETSIYHAGDTGLAAEMALVGELYSPKIALVPIGGHFTMDAYQAAKAIEMLRAKVVIPMHYNTFPVIRADPEELKRYVDEFKLDAKVVVLKPGELYQF.

This sequence belongs to the UPF0173 family.

This Hyperthermus butylicus (strain DSM 5456 / JCM 9403 / PLM1-5) protein is UPF0173 metal-dependent hydrolase Hbut_0886.